The chain runs to 229 residues: Adenine nucleotide translocase lysine N-methyltransferase (229 aa).

Positions 1-22 are N-terminal sequence (NTS); it reads MDQDDPAEALTELREKRLGLLE. The helical transmembrane segment at 20-42 threads the bilayer; the sequence is LLEIVQAAAGSGLAVYTIWALLL. The interval 43–77 is methyltransferase (MTase); the sequence is QPGFRRVPLRLQVPYVGASARQVENVLSLLRGRPG. Residues 43–77 form a pre-methyltransferase (preMT) region; it reads QPGFRRVPLRLQVPYVGASARQVENVLSLLRGRPG.

It belongs to the ANT/ATPSC lysine N-methyltransferase family.

The protein resides in the mitochondrion membrane. The enzyme catalyses L-lysyl-[protein] + 3 S-adenosyl-L-methionine = N(6),N(6),N(6)-trimethyl-L-lysyl-[protein] + 3 S-adenosyl-L-homocysteine + 3 H(+). Its function is as follows. Mitochondrial protein-lysine N-methyltransferase that trimethylates adenine nucleotide translocases ANT2/SLC25A5 and ANT3/SLC25A6, thereby regulating mitochondrial respiration. Probably also trimethylates ANT1/SLC25A4. The polypeptide is Adenine nucleotide translocase lysine N-methyltransferase (Mus musculus (Mouse)).